The sequence spans 718 residues: Exostosin-2 (718 aa).

Topologically, residues 1-25 are cytoplasmic; sequence MCASVKSNIRGPALIPRMKTKHRIY. Residues 26-46 traverse the membrane as a helical; Signal-anchor for type II membrane protein segment; it reads YVTLFSIVLLGLIATGMFQFW. Residues 47–718 lie on the Lumenal side of the membrane; the sequence is PHSIESSSDG…LKSFPNIGSL (672 aa). Cystine bridges form between cysteine 85–cysteine 90, cysteine 96–cysteine 151, cysteine 286–cysteine 300, and cysteine 318–cysteine 339. Asparagine 288 carries an N-linked (GlcNAc...) asparagine glycan. Residues leucine 461, arginine 465, asparagine 490, and asparagine 517 each contribute to the UDP site. UDP-N-acetyl-alpha-D-glucosamine is bound by residues arginine 465, asparagine 490, asparagine 517, arginine 522, aspartate 538, aspartate 539, and aspartate 540. UDP is bound by residues aspartate 538 and aspartate 539. Aspartate 540 lines the Mn(2+) pocket. A protein contacts are provided by tyrosine 582 and serine 584. Residues cysteine 626 and cysteine 676 are joined by a disulfide bond. 2 residues coordinate UDP-N-acetyl-alpha-D-glucosamine: glutamate 627 and aspartate 628. A glycan (N-linked (GlcNAc...) asparagine) is linked at asparagine 637. Lysine 651 and lysine 653 together coordinate a protein. A UDP-N-acetyl-alpha-D-glucosamine-binding site is contributed by arginine 673.

This sequence belongs to the glycosyltransferase 47 family. As to quaternary structure, part of the heparan sulfate polymerase, a dimeric complex composed of EXT1 and EXT2. Could also form homooligomeric complexes. Interacts with NDST1. Interacts with GALNT5. Requires Mn(2+) as cofactor. Post-translationally, N-glycosylated at Asn-637. A soluble form is generated by proteolytic processing. In terms of tissue distribution, expressed in heart, brain, spleen, lung, liver, skeletal muscle and testis. Heart shows a high expression.

The protein localises to the golgi apparatus membrane. It localises to the golgi apparatus. The protein resides in the cis-Golgi network membrane. It is found in the endoplasmic reticulum membrane. Its subcellular location is the secreted. It catalyses the reaction 3-O-{[(1-&gt;4)-beta-D-GlcA-(1-&gt;4)-alpha-D-GlcNAc](n)-(1-&gt;4)-beta-D-GlcA-(1-&gt;3)-beta-D-Gal-(1-&gt;3)-beta-D-Gal-(1-&gt;4)-beta-D-Xyl}-L-seryl-[protein] + UDP-N-acetyl-alpha-D-glucosamine = 3-O-{alpha-D-GlcNAc-[(1-&gt;4)-beta-D-GlcA-(1-&gt;4)-alpha-D-GlcNAc](n)-(1-&gt;4)-beta-D-GlcA-(1-&gt;3)-beta-D-Gal-(1-&gt;3)-beta-D-Gal-(1-&gt;4)-beta-D-Xyl}-L-seryl-[protein] + UDP + H(+). The protein operates within protein modification; protein glycosylation. Glycosyltransferase forming with EXT1 the heterodimeric heparan sulfate polymerase which catalyzes the elongation of the heparan sulfate glycan backbone. Glycan backbone extension consists in the alternating transfer of (1-&gt;4)-beta-D-GlcA and (1-&gt;4)-alpha-D-GlcNAc residues from their respective UDP-sugar donors. Both EXT1 and EXT2 are required for the full activity of the polymerase since EXT1 bears the N-acetylglucosaminyl-proteoglycan 4-beta-glucuronosyltransferase activity within the complex while EXT2 carries the glucuronosyl-N-acetylglucosaminyl-proteoglycan 4-alpha-N-acetylglucosaminyltransferase activity. Heparan sulfate proteoglycans are ubiquitous components of the extracellular matrix and play an important role in tissue homeostasis and signaling. In Mus musculus (Mouse), this protein is Exostosin-2.